Consider the following 987-residue polypeptide: Kinesin-like protein KIN-14G (987 aa).

A Calponin-homology (CH) domain is found at 44–163; sequence SLRRYEAAGW…CILALKSYSE (120 aa). The segment at 201 to 221 is disordered; the sequence is ISRTQSTDMLSTDQPLSSDGD. The Kinesin motor domain occupies 394 to 721; the sequence is NIRVYCRVRP…LKFAERVGSV (328 aa). Position 478–485 (478–485) interacts with ATP; the sequence is GQTGSGKT. Positions 725 to 754 form a coiled coil; it reads AARVNKDNSEVKELKEQIANLKMALVRKGN. Disordered stretches follow at residues 759 to 849 and 927 to 987; these read QPTA…ESKS and NIQN…SLGT. Residues 788 to 797 show a composition bias toward polar residues; it reads MGNTSNNSRP. The segment covering 840–849 has biased composition (basic and acidic residues); that stretch reads GKDEDRESKS. A compositionally biased stretch (polar residues) spans 964–974; sequence PPNTVNSQPQR.

This sequence belongs to the TRAFAC class myosin-kinesin ATPase superfamily. Kinesin family. KIN-14 subfamily. Monomer. As to expression, flower specific.

It is found in the cytoplasm. Its subcellular location is the cytoskeleton. In terms of biological role, microtubule-binding motor protein. This chain is Kinesin-like protein KIN-14G, found in Arabidopsis thaliana (Mouse-ear cress).